Reading from the N-terminus, the 33-residue chain is Neutrophil defensin 1 (33 aa).

3 cysteine pairs are disulfide-bonded: cysteine 3-cysteine 31, cysteine 5-cysteine 20, and cysteine 10-cysteine 30.

It belongs to the alpha-defensin family.

The protein localises to the secreted. Its function is as follows. Anti-fungal and bactericidal activity, greater against Gram-positive bacteria. The protein is Neutrophil defensin 1 of Mesocricetus auratus (Golden hamster).